Reading from the N-terminus, the 953-residue chain is Lysosomal alpha-glucosidase (953 aa).

The signal sequence occupies residues 1 to 27 (MNIRKPLCSNSVVGACTLVSLTTAVIL). A propeptide spanning residues 28 to 69 (GHLMLRELMLLPQDLHESSSGLWKTYRPHHQESYEPAPLHIQ) is cleaved from the precursor. A P-type domain is found at 80-131 (TQCDVTPNSRFDCAPDKGITQEQCEARGCCWVPAGQVLNGPVMGQPWCFFPP). Intrachain disulfides connect cysteine 82/cysteine 109, cysteine 92/cysteine 108, and cysteine 103/cysteine 127. Asparagine 140, asparagine 233, and asparagine 390 each carry an N-linked (GlcNAc...) asparagine glycan. Aspartate 404 lines the substrate pocket. Asparagine 470 carries N-linked (GlcNAc...) asparagine glycosylation. Aspartate 518 serves as the catalytic Nucleophile. Residue glutamate 521 is part of the active site. Cysteine 533 and cysteine 558 are joined by a disulfide. Residues arginine 600 and aspartate 616 each coordinate substrate. A disulfide bridge connects residues cysteine 647 and cysteine 658. An N-linked (GlcNAc...) asparagine glycan is attached at asparagine 652. Residue histidine 674 coordinates substrate. 2 N-linked (GlcNAc...) asparagine glycosylation sites follow: asparagine 883 and asparagine 926.

The protein belongs to the glycosyl hydrolase 31 family.

It is found in the lysosome. The protein localises to the lysosome membrane. It carries out the reaction Hydrolysis of terminal, non-reducing (1-&gt;4)-linked alpha-D-glucose residues with release of alpha-D-glucose.. In terms of biological role, essential for the degradation of glycogen in lysosomes. Has highest activity on alpha-1,4-linked glycosidic linkages, but can also hydrolyze alpha-1,6-linked glucans. The protein is Lysosomal alpha-glucosidase (Gaa) of Rattus norvegicus (Rat).